The sequence spans 177 residues: Shikimate kinase (177 aa).

ATP is bound at residue 17–22 (GAGKST). S21 serves as a coordination point for Mg(2+). D39, R63, and G85 together coordinate substrate. R123 serves as a coordination point for ATP. R142 provides a ligand contact to substrate. Position 160 (R160) interacts with ATP.

Belongs to the shikimate kinase family. Monomer. Mg(2+) is required as a cofactor.

The protein resides in the cytoplasm. It carries out the reaction shikimate + ATP = 3-phosphoshikimate + ADP + H(+). Its pathway is metabolic intermediate biosynthesis; chorismate biosynthesis; chorismate from D-erythrose 4-phosphate and phosphoenolpyruvate: step 5/7. Functionally, catalyzes the specific phosphorylation of the 3-hydroxyl group of shikimic acid using ATP as a cosubstrate. This Halorhodospira halophila (strain DSM 244 / SL1) (Ectothiorhodospira halophila (strain DSM 244 / SL1)) protein is Shikimate kinase.